Here is a 376-residue protein sequence, read N- to C-terminus: Actin, macronuclear (376 aa).

This sequence belongs to the actin family.

The protein localises to the cytoplasm. It is found in the cytoskeleton. It carries out the reaction ATP + H2O = ADP + phosphate + H(+). Actins are highly conserved proteins that are involved in various types of cell motility and are ubiquitously expressed in all eukaryotic cells. This Tetrahymena thermophila protein is Actin, macronuclear.